Here is a 423-residue protein sequence, read N- to C-terminus: 5-hydroxytryptamine receptor 1A-alpha (423 aa).

At 1–47 the chain is on the extracellular side; the sequence is MDLRATSSNDSNATSGYSDTAAVDWDEGENATGSGSLPDPELSYQII. Asparagine 9, asparagine 12, and asparagine 30 each carry an N-linked (GlcNAc...) asparagine glycan. The chain crosses the membrane as a helical span at residues 48–68; the sequence is TSLFLGALILCSIFGNSCVVA. The Cytoplasmic portion of the chain corresponds to 69-82; sequence AIALERSLQNVANY. The helical transmembrane segment at 83-107 threads the bilayer; sequence LIGSLAVTDLMVSVLVLPMAALYQV. At 108–116 the chain is on the extracellular side; the sequence is LNKWTLGQD. Residues 117 to 141 form a helical membrane-spanning segment; sequence ICDLFIALDVLCCTSSILHLCAIAL. Cysteines 118 and 196 form a disulfide. Serotonin is bound by residues aspartate 125 and cysteine 129. The DRY motif; important for ligand-induced conformation changes signature appears at 142–144; it reads DRY. Residues 142–161 lie on the Cytoplasmic side of the membrane; sequence DRYWAITDPIDYVNKRTPRR. A helical transmembrane segment spans residues 162 to 183; it reads AAVLISVTWLIGFSISIPPMLG. The Extracellular segment spans residues 184–202; that stretch reads WRSAEDRANPDACIISQDP. The helical transmembrane segment at 203-225 threads the bilayer; the sequence is GYTIYSTFGAFYIPLILMLVLYG. The Cytoplasmic portion of the chain corresponds to 226–347; the sequence is RIFKAARFRI…LARERKTVKT (122 aa). Residues 311-332 are disordered; it reads LPLPNTPQSSSHENINEKTTGT. Polar residues predominate over residues 316–329; it reads TPQSSSHENINEKT. 1D-myo-inositol 4-phosphate-binding residues include serine 320, lysine 346, threonine 347, and glycine 353. A helical transmembrane segment spans residues 348–371; it reads LGIIMGTFIFCWLPFFIVALVLPF. The Extracellular segment spans residues 372 to 379; that stretch reads CAENCYMP. The chain crosses the membrane as a helical span at residues 380-404; that stretch reads EWLGAVINWLGYSNSLLNPIIYAYF. An NPxxY motif; important for ligand-induced conformation changes and signaling motif is present at residues 397 to 401; it reads NPIIY. The 1D-myo-inositol 4-phosphate site is built by phenylalanine 404, asparagine 405, and lysine 406. Residues 405-423 are Cytoplasmic-facing; the sequence is NKDFQSAFKKILRCKFHRH.

It belongs to the G-protein coupled receptor 1 family. 5-hydroxytryptamine receptor subfamily.

The protein localises to the cell membrane. With respect to regulation, G-protein coupled receptor activity is regulated by lipids: phosphatidylinositol 4-phosphate increases HTR1A-mediated activity. In terms of biological role, G-protein coupled receptor for 5-hydroxytryptamine (serotonin). Also functions as a receptor for various drugs and psychoactive substances. Ligand binding causes a conformation change that triggers signaling via guanine nucleotide-binding proteins (G proteins) and modulates the activity of downstream effectors, such as adenylate cyclase. HTR1A is coupled to G(i)/G(o) G alpha proteins and mediates inhibitory neurotransmission: signaling inhibits adenylate cyclase activity and activates a phosphatidylinositol-calcium second messenger system that regulates the release of Ca(2+) ions from intracellular stores. Beta-arrestin family members regulate signaling by mediating both receptor desensitization and resensitization processes. The chain is 5-hydroxytryptamine receptor 1A-alpha (htr1aa) from Takifugu rubripes (Japanese pufferfish).